The primary structure comprises 175 residues: DM domain-containing protein mab-23 (175 aa).

The DM DNA-binding region spans Cys8–His56. The segment at Asn58–Gly93 is disordered. The segment covering Glu59–Ser71 has biased composition (polar residues). Over residues Thr81 to Thr91 the composition is skewed to low complexity.

Expressed in a limited number of non-sex-specific tissues in males, including 6-8 unidentified neurons of the head, ventral body wall muscle, and the PHCL/R neurons.

It is found in the nucleus. Probable transcription factor that plays a role in the development of the dopaminergic neurons of the male-specific genital sensilla (simple sense organs) known as rays, by negatively regulating the activity of the transcription factor ast-1. Involved in male mating behavior, probably as a result of a role in the differentiation of male-specific diagonal muscles. Required for development of the male proctodeum. May be dispensable in hermaphrodites. The protein is DM domain-containing protein mab-23 of Caenorhabditis elegans.